The sequence spans 274 residues: Large ribosomal subunit protein uL2cz/uL2cy (274 aa).

A disordered region spans residues Pro-225–Lys-274.

It belongs to the universal ribosomal protein uL2 family. Part of the 50S ribosomal subunit.

It localises to the plastid. Its subcellular location is the chloroplast. This chain is Large ribosomal subunit protein uL2cz/uL2cy (rpl2-A), found in Crucihimalaya wallichii (Rock-cress).